The primary structure comprises 377 residues: Endoplasmic reticulum-Golgi intermediate compartment protein 2 (377 aa).

At M1–G33 the chain is on the cytoplasmic side. The helical transmembrane segment at G34–V54 threads the bilayer. Residues Y55 to C319 are Lumenal-facing. The chain crosses the membrane as a helical span at residues G320–V340. At E341–H377 the chain is on the cytoplasmic side.

The protein belongs to the ERGIC family. As to quaternary structure, may form a heteromeric complex composed of ERGIC1, ERGIC2 and ERGIC3. Interacts with ERGIC3, the interaction is required for the stable expression of both proteins. May interact with EEF1A1.

The protein resides in the endoplasmic reticulum-Golgi intermediate compartment membrane. Its subcellular location is the golgi apparatus. It localises to the cis-Golgi network membrane. The protein localises to the endoplasmic reticulum membrane. It is found in the cytoplasm. The protein resides in the nucleus. In terms of biological role, possible role in transport between endoplasmic reticulum and Golgi. In Mus musculus (Mouse), this protein is Endoplasmic reticulum-Golgi intermediate compartment protein 2 (Ergic2).